The following is a 232-amino-acid chain: Large ribosomal subunit protein uL1 (232 aa).

Belongs to the universal ribosomal protein uL1 family. Part of the 50S ribosomal subunit.

Binds directly to 23S rRNA. The L1 stalk is quite mobile in the ribosome, and is involved in E site tRNA release. In terms of biological role, protein L1 is also a translational repressor protein, it controls the translation of the L11 operon by binding to its mRNA. This is Large ribosomal subunit protein uL1 from Azobacteroides pseudotrichonymphae genomovar. CFP2.